Reading from the N-terminus, the 190-residue chain is Probable nicotinate-nucleotide adenylyltransferase (190 aa).

This sequence belongs to the NadD family.

The catalysed reaction is nicotinate beta-D-ribonucleotide + ATP + H(+) = deamido-NAD(+) + diphosphate. It participates in cofactor biosynthesis; NAD(+) biosynthesis; deamido-NAD(+) from nicotinate D-ribonucleotide: step 1/1. Its function is as follows. Catalyzes the reversible adenylation of nicotinate mononucleotide (NaMN) to nicotinic acid adenine dinucleotide (NaAD). The protein is Probable nicotinate-nucleotide adenylyltransferase of Frankia casuarinae (strain DSM 45818 / CECT 9043 / HFP020203 / CcI3).